Consider the following 393-residue polypeptide: S-adenosylmethionine synthase (393 aa).

Glutamate 9 lines the Mg(2+) pocket. An ATP-binding site is contributed by histidine 15. K(+) is bound at residue glutamate 43. 2 residues coordinate L-methionine: glutamate 56 and glutamine 99. ATP-binding positions include 167 to 169 (DGK), 235 to 238 (SGRF), aspartate 246, 252 to 253 (RK), alanine 269, lysine 273, and lysine 277. An L-methionine-binding site is contributed by aspartate 246. Lysine 277 is a binding site for L-methionine.

It belongs to the AdoMet synthase family. As to quaternary structure, homotetramer. The cofactor is Mn(2+). It depends on Mg(2+) as a cofactor. Requires Co(2+) as cofactor. K(+) is required as a cofactor.

It is found in the cytoplasm. The catalysed reaction is L-methionine + ATP + H2O = S-adenosyl-L-methionine + phosphate + diphosphate. Its pathway is amino-acid biosynthesis; S-adenosyl-L-methionine biosynthesis; S-adenosyl-L-methionine from L-methionine: step 1/1. Its function is as follows. Catalyzes the formation of S-adenosylmethionine from methionine and ATP. The reaction comprises two steps that are both catalyzed by the same enzyme: formation of S-adenosylmethionine (AdoMet) and triphosphate, and subsequent hydrolysis of the triphosphate. The polypeptide is S-adenosylmethionine synthase (SAMS) (Solanum palustre (Non-tuber-performing potato)).